We begin with the raw amino-acid sequence, 213 residues long: Probable nicotinate-nucleotide adenylyltransferase (213 aa).

It belongs to the NadD family.

The catalysed reaction is nicotinate beta-D-ribonucleotide + ATP + H(+) = deamido-NAD(+) + diphosphate. Its pathway is cofactor biosynthesis; NAD(+) biosynthesis; deamido-NAD(+) from nicotinate D-ribonucleotide: step 1/1. Catalyzes the reversible adenylation of nicotinate mononucleotide (NaMN) to nicotinic acid adenine dinucleotide (NaAD). In Ruegeria pomeroyi (strain ATCC 700808 / DSM 15171 / DSS-3) (Silicibacter pomeroyi), this protein is Probable nicotinate-nucleotide adenylyltransferase.